Here is a 299-residue protein sequence, read N- to C-terminus: Bifunctional protein FolD (299 aa).

NADP(+) is bound by residues 169-171 (GRS), serine 194, and isoleucine 235.

It belongs to the tetrahydrofolate dehydrogenase/cyclohydrolase family. Homodimer.

It catalyses the reaction (6R)-5,10-methylene-5,6,7,8-tetrahydrofolate + NADP(+) = (6R)-5,10-methenyltetrahydrofolate + NADPH. It carries out the reaction (6R)-5,10-methenyltetrahydrofolate + H2O = (6R)-10-formyltetrahydrofolate + H(+). It functions in the pathway one-carbon metabolism; tetrahydrofolate interconversion. In terms of biological role, catalyzes the oxidation of 5,10-methylenetetrahydrofolate to 5,10-methenyltetrahydrofolate and then the hydrolysis of 5,10-methenyltetrahydrofolate to 10-formyltetrahydrofolate. This is Bifunctional protein FolD from Nostoc sp. (strain PCC 7120 / SAG 25.82 / UTEX 2576).